A 561-amino-acid chain; its full sequence is Oxygen-dependent choline dehydrogenase (561 aa).

An FAD-binding site is contributed by 7 to 36 (DYIIVGAGSAGNVLASRLTEDADVTVLLLE). Histidine 474 functions as the Proton acceptor in the catalytic mechanism.

This sequence belongs to the GMC oxidoreductase family. FAD serves as cofactor.

It carries out the reaction choline + A = betaine aldehyde + AH2. The catalysed reaction is betaine aldehyde + NAD(+) + H2O = glycine betaine + NADH + 2 H(+). The protein operates within amine and polyamine biosynthesis; betaine biosynthesis via choline pathway; betaine aldehyde from choline (cytochrome c reductase route): step 1/1. Functionally, involved in the biosynthesis of the osmoprotectant glycine betaine. Catalyzes the oxidation of choline to betaine aldehyde and betaine aldehyde to glycine betaine at the same rate. The sequence is that of Oxygen-dependent choline dehydrogenase from Paraburkholderia phytofirmans (strain DSM 17436 / LMG 22146 / PsJN) (Burkholderia phytofirmans).